A 326-amino-acid chain; its full sequence is (+)-T-muurolol synthase ((2E,6E)-farnesyl diphosphate cyclizing) (326 aa).

Mg(2+) is bound by residues Asp81 and Asp85. The short motif at Asp81 to Asp85 is the DDXXD motif element. Arg175 provides a ligand contact to substrate. Asn221 and Ser225 together coordinate Mg(2+). Position 228 (Lys228) interacts with substrate. Glu229 contributes to the Mg(2+) binding site. Arg309–Tyr310 lines the substrate pocket.

Belongs to the terpene synthase family. Mg(2+) serves as cofactor.

The catalysed reaction is (2E,6E)-farnesyl diphosphate + H2O = (+)-T-muurolol + diphosphate. The protein operates within secondary metabolite biosynthesis; terpenoid biosynthesis. Its function is as follows. Catalyzes the conversion of (2E,6E)-farnesyl diphosphate (FPP) into (+)-T-muurolol via a 1,10-cyclization, which requires isomerization of FPP to nerolidyl diphosphate (NPP) and then abstraction of the pyrophosphate from intermediate NPP leading to a (E,Z)-germacradienyl (helminthogermacradienyl) cation. This Roseiflexus castenholzii (strain DSM 13941 / HLO8) protein is (+)-T-muurolol synthase ((2E,6E)-farnesyl diphosphate cyclizing).